We begin with the raw amino-acid sequence, 447 residues long: GTPase Der (447 aa).

EngA-type G domains are found at residues 3-167 (PVVA…HLED) and 180-353 (IKLA…KAAN). GTP contacts are provided by residues 9-16 (GRPNVGKS), 56-60 (DTGGF), 119-122 (NKAE), 186-193 (GRPNVGKS), 233-237 (DTAGL), and 298-301 (NKWD). The KH-like domain maps to 354 to 438 (CKMSTPILTR…PMRIEFKSST (85 aa)).

The protein belongs to the TRAFAC class TrmE-Era-EngA-EngB-Septin-like GTPase superfamily. EngA (Der) GTPase family. Associates with the 50S ribosomal subunit.

Functionally, GTPase that plays an essential role in the late steps of ribosome biogenesis. The chain is GTPase Der from Albidiferax ferrireducens (strain ATCC BAA-621 / DSM 15236 / T118) (Rhodoferax ferrireducens).